A 420-amino-acid chain; its full sequence is Dihydrolipoyllysine-residue succinyltransferase component of 2-oxoglutarate dehydrogenase complex (420 aa).

The Lipoyl-binding domain occupies Met-1–Gly-76. Lys-42 carries the post-translational modification N6-lipoyllysine. A disordered region spans residues Val-75–Ala-201. The segment covering Asn-81–Ser-90 has biased composition (polar residues). Positions Ser-91–Pro-102 are enriched in basic and acidic residues. Residues Lys-103 to Pro-127 show a composition bias toward polar residues. One can recognise a Peripheral subunit-binding (PSBD) domain in the interval Asn-124–Gln-160. Residues Asp-149–Asn-158 show a composition bias toward basic and acidic residues. The span at Ser-159 to Pro-188 shows a compositional bias: low complexity. Catalysis depends on residues His-391 and Asp-395.

This sequence belongs to the 2-oxoacid dehydrogenase family. In terms of assembly, forms a 24-polypeptide structural core with octahedral symmetry. Part of the 2-oxoglutarate dehydrogenase (OGDH) complex composed of E1 (2-oxoglutarate dehydrogenase), E2 (dihydrolipoamide succinyltransferase) and E3 (dihydrolipoamide dehydrogenase); the complex contains multiple copies of the three enzymatic components (E1, E2 and E3). (R)-lipoate serves as cofactor.

The enzyme catalyses N(6)-[(R)-dihydrolipoyl]-L-lysyl-[protein] + succinyl-CoA = N(6)-[(R)-S(8)-succinyldihydrolipoyl]-L-lysyl-[protein] + CoA. It functions in the pathway amino-acid degradation; L-lysine degradation via saccharopine pathway; glutaryl-CoA from L-lysine: step 6/6. Functionally, E2 component of the 2-oxoglutarate dehydrogenase (OGDH) complex which catalyzes the second step in the conversion of 2-oxoglutarate to succinyl-CoA and CO(2). This chain is Dihydrolipoyllysine-residue succinyltransferase component of 2-oxoglutarate dehydrogenase complex (odhB), found in Staphylococcus epidermidis (strain ATCC 12228 / FDA PCI 1200).